The primary structure comprises 423 residues: 5-hydroxytryptamine receptor 1A (423 aa).

Residues 1 to 38 (MEGLSPRQGNNTTSSEGPFGTLGNATGISDVTFSYQVI) are Extracellular-facing. Asn-10, Asn-11, and Asn-24 each carry an N-linked (GlcNAc...) asparagine glycan. The helical transmembrane segment at 39–59 (TSLLLGTLIFCAVLGNACVVA) threads the bilayer. Over 60–73 (AIALERSLQNVANY) the chain is Cytoplasmic. Residues 74 to 98 (LIGSLAVTDLMVSVLVLPMAALYQV) form a helical membrane-spanning segment. Residues 99 to 107 (LNKWTLGQV) are Extracellular-facing. Residues 108 to 132 (TCDLFIALDVLCCTSSILHLCAIAL) form a helical membrane-spanning segment. Cys-109 and Cys-187 form a disulfide bridge. Asp-116 and Cys-120 together coordinate serotonin. Positions 133–135 (DRY) match the DRY motif; important for ligand-induced conformation changes motif. At 133–152 (DRYWAITDPIDYVNKRTPRR) the chain is on the cytoplasmic side. Residues 153–174 (AAALISLTWLIGFLISIPPMLG) form a helical membrane-spanning segment. At 175-193 (WRTPEDRSDPDACTISKDH) the chain is on the extracellular side. Residues 194-216 (GYTIYSTFGAFYIPLLLMLVLYG) traverse the membrane as a helical segment. Residues 217 to 346 (RIFRAARFRI…LARERKTVKT (130 aa)) lie on the Cytoplasmic side of the membrane. Residues 235–277 (RKGADARSGVSPAPQPRKSVNGEPGGREWRQGPGSQAGGPLCT) form a disordered region. Lys-345, Thr-346, and Gly-352 together coordinate 1D-myo-inositol 4-phosphate. The helical transmembrane segment at 347–370 (LGIIMGTFILCWLPFFIVALVLPF) threads the bilayer. Residues 371-378 (CESSCHMP) are Extracellular-facing. Residues 379–403 (TLLGAIINWLGYSNSLLNPVIYAYF) form a helical membrane-spanning segment. Positions 396-400 (NPVIY) match the NPxxY motif; important for ligand-induced conformation changes and signaling motif. The 1D-myo-inositol 4-phosphate site is built by Phe-403, Asn-404, and Lys-405. The Cytoplasmic segment spans residues 404 to 423 (NKDFQNAFKKIVRCKFCRRR).

The protein belongs to the G-protein coupled receptor 1 family. 5-hydroxytryptamine receptor subfamily. HTR1A sub-subfamily. In terms of assembly, heterodimer; heterodimerizes with GPER1. Interacts with YIF1B. Interacts with GPR39 and GALR1.

The protein localises to the cell membrane. Its subcellular location is the cell projection. It localises to the dendrite. Its activity is regulated as follows. G-protein coupled receptor activity is regulated by lipids: phosphatidylinositol 4-phosphate increases HTR1A-mediated activity. In terms of biological role, G-protein coupled receptor for 5-hydroxytryptamine (serotonin). Also functions as a receptor for various drugs and psychoactive substances. Ligand binding causes a conformation change that triggers signaling via guanine nucleotide-binding proteins (G proteins) and modulates the activity of downstream effectors, such as adenylate cyclase. HTR1A is coupled to G(i)/G(o) G alpha proteins and mediates inhibitory neurotransmission: signaling inhibits adenylate cyclase activity and activates a phosphatidylinositol-calcium second messenger system that regulates the release of Ca(2+) ions from intracellular stores. Beta-arrestin family members regulate signaling by mediating both receptor desensitization and resensitization processes. The protein is 5-hydroxytryptamine receptor 1A (HTR1A) of Canis lupus familiaris (Dog).